The sequence spans 323 residues: METKKNNSEYIPEFDKSFRHPRYWGAWLGVAAMAGIALTPPKFRDPILARLGRFAGRLGKSSRRRALINLSLCFPERSEAEREAIVDEMFATAPQAMAMMAELAIRGPEKIQPRVDWQGLEIIEEMRRNNEKVIFLVPHGWAVDIPAMLMASQGQKMAAMFHNQGNPVFDYVWNTVRRRFGGRLHARNDGIKPFIQSVRQGYWGYYLPDQDHGPEHSEFVDFFATYKATLPAIGRLMKVCRARVVPLFPIYDGKTHRLTIQVRPPMDDLLEADDHTIARRMNEEVEIFVGPRPEQYTWILKLLKTRKPGEIQPYKRKDLYPIK.

A helical membrane pass occupies residues Tyr-23–Phe-43. The HXXXXD motif motif lies at His-139 to Asp-144.

This sequence belongs to the LpxL/LpxM/LpxP family. LpxM subfamily.

It is found in the cell inner membrane. It catalyses the reaction alpha-Kdo-(2-&gt;4)-alpha-Kdo-(2-&gt;6)-(dodecanoyl)-lipid IVA (E. coli) + tetradecanoyl-[ACP] = alpha-Kdo-(2-&gt;4)-alpha-Kdo-(2-&gt;6)-lipid A (E. coli) + holo-[ACP]. The catalysed reaction is (9Z)-hexadecenoyl-(Kdo)2-lipid IVA (E. coli) + tetradecanoyl-[ACP] = ((9Z)-hexadecenoyl-tetradecanoyl)-(Kdo)2-lipid A + holo-[ACP]. The protein operates within glycolipid biosynthesis; KDO(2)-lipid A biosynthesis; KDO(2)-lipid A from CMP-3-deoxy-D-manno-octulosonate and lipid IV(A): step 4/4. It functions in the pathway bacterial outer membrane biogenesis; lipopolysaccharide biosynthesis. In terms of biological role, catalyzes the transfer of myristate from myristoyl-[acyl-carrier-protein] (ACP) to Kdo(2)-(lauroyl)-lipid IV(A) to form Kdo(2)-lipid A. Can probably also catalyze the transfer of myristate to Kdo(2)-(palmitoleoyl)-lipid IV(A) to form the cold-adapted Kdo(2)-lipid A. In vitro, can acylate Kdo(2)-lipid IV(A), but acylation of (KDO)2-(lauroyl)-lipid IV(A) is about 100 times faster. In vitro, can use lauroyl-ACP but displays a slight kinetic preference for myristoyl-ACP. The chain is Lipid A biosynthesis myristoyltransferase from Escherichia coli (strain K12).